We begin with the raw amino-acid sequence, 342 residues long: L-threonine 3-dehydrogenase (342 aa).

Cysteine 38 contributes to the Zn(2+) binding site. Active-site charge relay system residues include threonine 40 and histidine 43. Residues histidine 63, glutamate 64, cysteine 93, cysteine 96, cysteine 99, and cysteine 107 each coordinate Zn(2+). NAD(+)-binding positions include isoleucine 175, aspartate 195, arginine 200, 262 to 264, and 286 to 287; these read LGI and IY.

Belongs to the zinc-containing alcohol dehydrogenase family. As to quaternary structure, homotetramer. The cofactor is Zn(2+).

The protein resides in the cytoplasm. The catalysed reaction is L-threonine + NAD(+) = (2S)-2-amino-3-oxobutanoate + NADH + H(+). The protein operates within amino-acid degradation; L-threonine degradation via oxydo-reductase pathway; glycine from L-threonine: step 1/2. Functionally, catalyzes the NAD(+)-dependent oxidation of L-threonine to 2-amino-3-ketobutyrate. The protein is L-threonine 3-dehydrogenase of Burkholderia multivorans (strain ATCC 17616 / 249).